Consider the following 477-residue polypeptide: Shikimate biosynthesis protein AroDE (477 aa).

Residues 1–209 (MLCATVSGPS…LEELLSYNYS (209 aa)) form a 3-dehydroquinate dehydratase region. 3-dehydroquinate-binding positions include serine 21, 29-31 (ELR), and 56-58 (TFR). Histidine 111 functions as the Proton donor/acceptor; for 3-dehydroquinate dehydratase activity in the catalytic mechanism. The active-site Schiff-base intermediate with substrate; for 3-dehydroquinate dehydratase activity is the lysine 134. The 3-dehydroquinate site is built by arginine 172 and glutamine 197. The segment at 210-477 (KLSEKSHIYG…NYVKNFMAKV (268 aa)) is shikimate 5-dehydrogenase. 228 to 230 (SIS) is a binding site for shikimate. Lysine 279 acts as the Proton acceptor; for shikimate dehydrogenase activity in catalysis. Shikimate is bound by residues asparagine 300 and aspartate 315. NADP(+)-binding positions include 339-343 (GAGGA), 362-364 (NRT), and glycine 438. Shikimate is bound at residue glutamine 445.

This sequence in the N-terminal section; belongs to the type-I 3-dehydroquinase family. It in the C-terminal section; belongs to the shikimate dehydrogenase family.

It carries out the reaction 3-dehydroquinate = 3-dehydroshikimate + H2O. The enzyme catalyses shikimate + NADP(+) = 3-dehydroshikimate + NADPH + H(+). The protein operates within metabolic intermediate biosynthesis; chorismate biosynthesis; chorismate from D-erythrose 4-phosphate and phosphoenolpyruvate: step 3/7. It participates in metabolic intermediate biosynthesis; chorismate biosynthesis; chorismate from D-erythrose 4-phosphate and phosphoenolpyruvate: step 4/7. Functionally, bifunctional enzyme that catalyzes two sequential steps of the aromatic amino acids biosynthetic pathway. In the first reaction, the AroD domain catalyzes the cis-dehydration of 3-dehydroquinate (DHQ) and introduces the first double bond of the aromatic ring to yield 3-dehydroshikimate; in the second reaction, the AroE domain catalyzes the reversible NADPH linked reduction of 3-dehydroshikimate (DHSA) to yield shikimate (SA). The protein is Shikimate biosynthesis protein AroDE of Chlamydia pneumoniae (Chlamydophila pneumoniae).